Consider the following 463-residue polypeptide: Chromogranin-A (463 aa).

An N-terminal signal peptide occupies residues 1–18 (MRSTAVLALLLCAGQVFA). Cys35 and Cys56 form a disulfide bridge. The disordered stretch occupies residues 88–440 (KERAQQPLKQ…ANRRAEDQEL (353 aa)). Positions 92–116 (QQPLKQQQPPKQQQQQQQQQQQEQQ) are enriched in low complexity. Ser119 carries the phosphoserine modification. A compositionally biased stretch (basic and acidic residues) spans 134 to 160 (DAKHRDAAAEVPSRDTMEKRKDSDKGQ). Over residues 196–208 (TATNTQSPTSLPS) the composition is skewed to polar residues. Phosphoserine is present on residues Ser220, Ser282, and Ser308. Basic and acidic residues predominate over residues 301-310 (GKGELEHSQQ). Gly329 is modified (glycine amide). Basic and acidic residues-rich tracts occupy residues 331–340 (KGRELEHKQE) and 348–375 (RLSR…KRLE). Phosphoserine is present on residues Ser350 and Ser383. Position 384 is a methionine sulfoxide (Met384). Over residues 409–437 (SSREDSVEARSDFEEKKEEEGSANRRAED) the composition is skewed to basic and acidic residues. Phosphoserine is present on residues Ser410, Ser414, and Ser430. O-linked (Xyl...) (chondroitin sulfate) serine glycosylation is present at Ser430. Pyrrolidone carboxylic acid is present on Gln438. Residue Ser444 is modified to Phosphoserine.

Belongs to the chromogranin/secretogranin protein family. Self-interacts; self-assembly is promoted in vitro by chondroitin sulfate attachment which occurs at mildly acidic pH conditions. Interacts with SCG3; this interaction is optimal in conditions mimicking the lumenal milieu of the trans-Golgi network, i.e. pH 5.5 and 10 mM Ca(+2). Interacts with ITPR1 in the secretory granules. In terms of processing, O-glycosylated; contains chondroitin sulfate (CS). CS attachment is pH-dependent, being observed at mildly acidic conditions of pH 5 but not at neutral pH, and promotes self-assembly in vitro.

It localises to the cytoplasmic vesicle. The protein resides in the secretory vesicle. The protein localises to the neuronal dense core vesicle. Its subcellular location is the secreted. Its function is as follows. Strongly inhibits glucose induced insulin release from the pancreas. In terms of biological role, inhibits catecholamine release from chromaffin cells and noradrenergic neurons by acting as a non-competitive nicotinic cholinergic antagonist. Can induce mast cell migration, degranulation and production of cytokines and chemokines. Regulates granule biogenesis in endocrine cells by up-regulating the transcription of protease nexin 1 (SERPINE2) via a cAMP-PKA-SP1 pathway. This leads to inhibition of granule protein degradation in the Golgi complex which in turn promotes granule formation. Pyroglutaminated (pGlu)-serpinin exerts an antiapoptotic effect on cells exposed to oxidative stress. The protein is Chromogranin-A (Chga) of Mus musculus (Mouse).